Here is a 562-residue protein sequence, read N- to C-terminus: Serine palmitoyltransferase 2 (562 aa).

A helical membrane pass occupies residues 61 to 81 (LITYLNYLILIILGHIHDFLG). K365 carries the N6-(pyridoxal phosphate)lysine modification.

Belongs to the class-II pyridoxal-phosphate-dependent aminotransferase family. Pyridoxal 5'-phosphate serves as cofactor.

It localises to the membrane. It carries out the reaction L-serine + hexadecanoyl-CoA + H(+) = 3-oxosphinganine + CO2 + CoA. It functions in the pathway lipid metabolism; sphingolipid metabolism. This Kluyveromyces lactis (strain ATCC 8585 / CBS 2359 / DSM 70799 / NBRC 1267 / NRRL Y-1140 / WM37) (Yeast) protein is Serine palmitoyltransferase 2 (LCB2).